The primary structure comprises 464 residues: MVQAAFSPVGPTLGDAIPGFGTDGIRGRVGSVVTPALCLQVGYWVGRVLAVEGPVLIGMDSRTSGSMVASALTAGLTAAGREVWNLGLCPTPAVPLLIRKFGAAGGLMVSASHNPPADNGIKVFGANGAKLAPERQARIEAGLRGEIDHSDHDHSLCAGLRQSSDLMADYRELLLSAVGSHRLDGVPIVLDLCWGSATACAADAFQALGADLTVLHGEPDGSRINVGCGSTALGPLQEAVKERGAVMGFAFDGDADRMLAVDGRGRIVDGDHVMFLWGSVLQEQQALPDQRLVATVMSNLGFQRAWEQRGGILERTPVGDQHVHAAMVASGAALGGEQSGHILAASHGLCGDGVLTALQLSTLCHAKGITLGDWLDRSFQPFPQKLVNVTVPSQARRKAWSSCEPLVAAIRSAEETMGSDGRVLVRASGTEPLVRVMVEAADASLVDHWADHLASVVDQSLNAA.

Catalysis depends on serine 112, which acts as the Phosphoserine intermediate. Mg(2+)-binding residues include serine 112, aspartate 252, aspartate 254, and aspartate 256. Serine 112 carries the phosphoserine modification.

The protein belongs to the phosphohexose mutase family. Mg(2+) is required as a cofactor. Post-translationally, activated by phosphorylation.

It catalyses the reaction alpha-D-glucosamine 1-phosphate = D-glucosamine 6-phosphate. In terms of biological role, catalyzes the conversion of glucosamine-6-phosphate to glucosamine-1-phosphate. The chain is Phosphoglucosamine mutase from Synechococcus sp. (strain CC9902).